We begin with the raw amino-acid sequence, 185 residues long: MAEEKQTPRMKTHYFEVVRKTLQEKFNYKNVMQIPRVDKIVINMGIGEATADSKKPSIAAEDLGLITGQKAVVTRARNSIATFKVREGMPLGAKVTLRKDRMFEFLDRLVTIALPRVRDFRGLNPKSFDGRGNFAMGIKEHIVFPEINYDKVDQIWGMDIIVCTTAKTDDEARELLRAFNFPFRS.

Belongs to the universal ribosomal protein uL5 family. In terms of assembly, part of the 50S ribosomal subunit; part of the 5S rRNA/L5/L18/L25 subcomplex. Contacts the 5S rRNA and the P site tRNA. Forms a bridge to the 30S subunit in the 70S ribosome.

This is one of the proteins that bind and probably mediate the attachment of the 5S RNA into the large ribosomal subunit, where it forms part of the central protuberance. In the 70S ribosome it contacts protein S13 of the 30S subunit (bridge B1b), connecting the 2 subunits; this bridge is implicated in subunit movement. Contacts the P site tRNA; the 5S rRNA and some of its associated proteins might help stabilize positioning of ribosome-bound tRNAs. The polypeptide is Large ribosomal subunit protein uL5 (Bartonella henselae (strain ATCC 49882 / DSM 28221 / CCUG 30454 / Houston 1) (Rochalimaea henselae)).